Here is a 119-residue protein sequence, read N- to C-terminus: Small ribosomal subunit protein bS6 (119 aa).

Residues 95–119 are disordered; the sequence is AVTEPSPLAKGNEKREDRKESEDAE. Positions 105 to 119 are enriched in basic and acidic residues; that stretch reads GNEKREDRKESEDAE.

It belongs to the bacterial ribosomal protein bS6 family.

In terms of biological role, binds together with bS18 to 16S ribosomal RNA. In Halorhodospira halophila (strain DSM 244 / SL1) (Ectothiorhodospira halophila (strain DSM 244 / SL1)), this protein is Small ribosomal subunit protein bS6.